A 191-amino-acid chain; its full sequence is Neuronal calcium sensor 1 (191 aa).

The N-myristoyl glycine moiety is linked to residue Gly2. EF-hand domains are found at residues 24-59 (EAEI…FPFG), 60-95 (DPSK…TSRG), 96-131 (TVEE…IYRM), and 144-179 (TPEK…DPTI). Ca(2+) contacts are provided by Asp73, Asn75, Asp77, Glu84, Asp109, Asp111, Asp113, Glu120, Asp157, Asn159, Asp161, Lys163, and Glu168.

Belongs to the recoverin family.

Functionally, neuronal calcium sensor, regulator of G protein-coupled receptor phosphorylation in a calcium dependent manner. Regulates neurite extension and branching by activity-dependent (Ca2+) influx in growth cones. The sequence is that of Neuronal calcium sensor 1 from Aplysia californica (California sea hare).